Consider the following 271-residue polypeptide: 3-methyl-2-oxobutanoate hydroxymethyltransferase (271 aa).

2 residues coordinate Mg(2+): Asp50 and Asp89. 3-methyl-2-oxobutanoate contacts are provided by residues 50–51 (DS), Asp89, and Lys118. Position 120 (Glu120) interacts with Mg(2+). Residue Glu187 is the Proton acceptor of the active site.

This sequence belongs to the PanB family. In terms of assembly, homodecamer; pentamer of dimers. Requires Mg(2+) as cofactor.

It is found in the cytoplasm. The enzyme catalyses 3-methyl-2-oxobutanoate + (6R)-5,10-methylene-5,6,7,8-tetrahydrofolate + H2O = 2-dehydropantoate + (6S)-5,6,7,8-tetrahydrofolate. Its pathway is cofactor biosynthesis; (R)-pantothenate biosynthesis; (R)-pantoate from 3-methyl-2-oxobutanoate: step 1/2. Functionally, catalyzes the reversible reaction in which hydroxymethyl group from 5,10-methylenetetrahydrofolate is transferred onto alpha-ketoisovalerate to form ketopantoate. This chain is 3-methyl-2-oxobutanoate hydroxymethyltransferase, found in Campylobacter concisus (strain 13826).